The sequence spans 270 residues: Indole-3-glycerol phosphate synthase (270 aa).

It belongs to the TrpC family.

It carries out the reaction 1-(2-carboxyphenylamino)-1-deoxy-D-ribulose 5-phosphate + H(+) = (1S,2R)-1-C-(indol-3-yl)glycerol 3-phosphate + CO2 + H2O. Its pathway is amino-acid biosynthesis; L-tryptophan biosynthesis; L-tryptophan from chorismate: step 4/5. In Salinibacter ruber (strain DSM 13855 / M31), this protein is Indole-3-glycerol phosphate synthase.